Reading from the N-terminus, the 143-residue chain is UPF0225 protein Reut_A0143 (143 aa).

Belongs to the UPF0225 family.

This Cupriavidus pinatubonensis (strain JMP 134 / LMG 1197) (Cupriavidus necator (strain JMP 134)) protein is UPF0225 protein Reut_A0143.